Reading from the N-terminus, the 395-residue chain is uncharacterized protein (395 aa).

This is an uncharacterized protein from Escherichia coli (strain K12).